A 724-amino-acid chain; its full sequence is Long-chain-fatty-acid--CoA ligase ACSBG1 (724 aa).

The tract at residues M1 to Q30 is disordered. Residues D20–Q30 are compositionally biased toward basic and acidic residues. Phosphoserine is present on residues S53 and S56. ATP-binding positions include T282–K290, A472–S477, D550, and R565. Phosphotyrosine is present on Y658. K701 lines the ATP pocket.

Belongs to the ATP-dependent AMP-binding enzyme family. Bubblegum subfamily. As to expression, expressed primarily in brain. Expressed at lower level in testis and adrenal gland. Present in all regions of brain except pituitary.

It is found in the cytoplasm. The protein resides in the cytoplasmic vesicle. Its subcellular location is the microsome. The protein localises to the endoplasmic reticulum. It localises to the cell membrane. The catalysed reaction is a long-chain fatty acid + ATP + CoA = a long-chain fatty acyl-CoA + AMP + diphosphate. It catalyses the reaction (E)-hexadec-2-enoate + ATP + CoA = (2E)-hexadecenoyl-CoA + AMP + diphosphate. The enzyme catalyses hexadecanoate + ATP + CoA = hexadecanoyl-CoA + AMP + diphosphate. Functionally, catalyzes the conversion of fatty acids such as long-chain and very long-chain fatty acids to their active form acyl-CoAs for both synthesis of cellular lipids, and degradation via beta-oxidation. Can activate diverse saturated, monosaturated and polyunsaturated fatty acids. This chain is Long-chain-fatty-acid--CoA ligase ACSBG1, found in Homo sapiens (Human).